We begin with the raw amino-acid sequence, 141 residues long: Large ribosomal subunit protein uL11 (141 aa).

The protein belongs to the universal ribosomal protein uL11 family. Part of the ribosomal stalk of the 50S ribosomal subunit. Interacts with L10 and the large rRNA to form the base of the stalk. L10 forms an elongated spine to which L12 dimers bind in a sequential fashion forming a multimeric L10(L12)X complex. In terms of processing, one or more lysine residues are methylated.

In terms of biological role, forms part of the ribosomal stalk which helps the ribosome interact with GTP-bound translation factors. In Clostridium kluyveri (strain ATCC 8527 / DSM 555 / NBRC 12016 / NCIMB 10680 / K1), this protein is Large ribosomal subunit protein uL11.